The following is a 438-amino-acid chain: Aspartate--tRNA(Asp/Asn) ligase (438 aa).

L-aspartate is bound at residue Glu176. Residues 198 to 201 (QLYK) are aspartate. Arg220 is a binding site for L-aspartate. ATP contacts are provided by residues 220–222 (RAE), 228–230 (RHL), and Glu361. Positions 361 and 364 each coordinate Mg(2+). L-aspartate contacts are provided by Ser364 and Arg368. 409 to 412 (GADR) is a binding site for ATP.

The protein belongs to the class-II aminoacyl-tRNA synthetase family. Type 2 subfamily. In terms of assembly, homodimer. Mg(2+) is required as a cofactor.

It is found in the cytoplasm. It catalyses the reaction tRNA(Asx) + L-aspartate + ATP = L-aspartyl-tRNA(Asx) + AMP + diphosphate. Functionally, aspartyl-tRNA synthetase with relaxed tRNA specificity since it is able to aspartylate not only its cognate tRNA(Asp) but also tRNA(Asn). Reaction proceeds in two steps: L-aspartate is first activated by ATP to form Asp-AMP and then transferred to the acceptor end of tRNA(Asp/Asn). The sequence is that of Aspartate--tRNA(Asp/Asn) ligase from Methanococcus maripaludis (strain C6 / ATCC BAA-1332).